The following is a 502-amino-acid chain: Arginine-specific demethylase JMJ22 (502 aa).

A disordered region spans residues 15–45; the sequence is KSKSKRLKLHQHEPESLFPEKEVEEEDEDEG. The segment covering 24–35 has biased composition (basic and acidic residues); it reads HQHEPESLFPEK. Residues 80-126 form the F-box domain; the sequence is LGNLQILSDELVLDILGLLGANHLGVLATVTKSFYIFANHEPLWRNL. Positions 279 to 439 constitute a JmjC domain; sequence EKVPVLDSEY…NVLEFLKKPN (161 aa). Residues His324, Asp326, and His407 each contribute to the Fe cation site.

It belongs to the JARID1 histone demethylase family. Fe(2+) serves as cofactor. Expressed in inflorescences, roots and siliques, and, at low levels, in leaves and stems.

It localises to the nucleus. The catalysed reaction is N(omega),N(omega)-dimethyl-L-arginyl-[protein] + 2-oxoglutarate + O2 = N(omega)-methyl-L-arginyl-[protein] + formaldehyde + succinate + CO2. Its function is as follows. Histone demethylase that demethylates 'Arg-3' (H4R3me) of histone H4 with a specific activity for H4R3me2. Involved in the positive regulation of gene expression. Together with JMJ20, positively regulates seed germination by promoting the removal of repressive histone arginine methylations (e.g. H4R3me2) at GA3ox1 and GA3ox2 to trigger gibberellic acid (GA) biosynthesis. This is Arginine-specific demethylase JMJ22 from Arabidopsis thaliana (Mouse-ear cress).